A 359-amino-acid chain; its full sequence is Phospho-N-acetylmuramoyl-pentapeptide-transferase (359 aa).

A run of 10 helical transmembrane segments spans residues 3 to 23 (QIMI…PALI), 55 to 75 (VAIL…GLAF), 80 to 100 (ITAS…VGFL), 117 to 137 (TAKT…VLQF), 156 to 176 (IATV…VVSA), 187 to 207 (LDGL…LITF), 231 to 251 (LALI…WNAA), 255 to 275 (IFMG…LSVT), 280 to 300 (ILAV…VLQI), and 334 to 354 (FWLL…GEWL).

This sequence belongs to the glycosyltransferase 4 family. MraY subfamily. The cofactor is Mg(2+).

The protein localises to the cell inner membrane. It carries out the reaction UDP-N-acetyl-alpha-D-muramoyl-L-alanyl-gamma-D-glutamyl-meso-2,6-diaminopimeloyl-D-alanyl-D-alanine + di-trans,octa-cis-undecaprenyl phosphate = di-trans,octa-cis-undecaprenyl diphospho-N-acetyl-alpha-D-muramoyl-L-alanyl-D-glutamyl-meso-2,6-diaminopimeloyl-D-alanyl-D-alanine + UMP. It participates in cell wall biogenesis; peptidoglycan biosynthesis. Its function is as follows. Catalyzes the initial step of the lipid cycle reactions in the biosynthesis of the cell wall peptidoglycan: transfers peptidoglycan precursor phospho-MurNAc-pentapeptide from UDP-MurNAc-pentapeptide onto the lipid carrier undecaprenyl phosphate, yielding undecaprenyl-pyrophosphoryl-MurNAc-pentapeptide, known as lipid I. The polypeptide is Phospho-N-acetylmuramoyl-pentapeptide-transferase (Mycobacterium marinum (strain ATCC BAA-535 / M)).